The sequence spans 198 residues: MMQDVSSSPVSPADDSLSNSEEEPDRQQPPSGKRGGRKRRSSRRSAGGGAGPGGAAGGVGGGDEPGSPAQGKRGKKSAGCGGGAGGGGSSSGGGSPQSYEELQTQRVMANVRERQRTQSLNEAFAALRKIIPTLPSDKLSKIQTLKLAARYIDFLYQVLQSDELDSKMASCSYVAHERLSYAFSVWRMEGAWSMSASH.

Positions 1–18 (MMQDVSSSPVSPADDSLS) are enriched in low complexity. The disordered stretch occupies residues 1 to 101 (MMQDVSSSPV…GGGSPQSYEE (101 aa)). A compositionally biased stretch (basic residues) spans 34-43 (RGGRKRRSSR). Composition is skewed to gly residues over residues 46 to 64 (AGGG…GGDE) and 79 to 95 (GCGG…GGGS). The bHLH domain maps to 104-155 (TQRVMANVRERQRTQSLNEAFAALRKIIPTLPSDKLSKIQTLKLAARYIDFL). The segment at 157 to 187 (QVLQSDELDSKMASCSYVAHERLSYAFSVWR) is sufficient for transactivation activity.

As to quaternary structure, efficient DNA binding requires dimerization with another bHLH protein. Homodimer or heterodimer with E proteins such as TCF3. ID1 binds preferentially to TCF3 but does not interact efficiently with TWIST1 so ID1 levels control the amount of TCF3 available to dimerize with TWIST and thus determine the type of dimer formed.

The protein resides in the nucleus. Acts as a transcriptional regulator. Inhibits myogenesis by sequestrating E proteins, inhibiting trans-activation by MEF2, and inhibiting DNA-binding by MYOD1 through physical interaction. This interaction probably involves the basic domains of both proteins. Also represses expression of pro-inflammatory cytokines such as TNFA and IL1B. Regulates cranial suture patterning and fusion. Activates transcription as a heterodimer with E proteins. Regulates gene expression differentially, depending on dimer composition. Homodimers induce expression of FGFR2 and POSTN while heterodimers repress FGFR2 and POSTN expression and induce THBS1 expression. Heterodimerization is also required for osteoblast differentiation. Represses the activity of the circadian transcriptional activator: NPAS2-BMAL1 heterodimer. This chain is Twist-related protein 1 (TWIST1), found in Eulemur fulvus fulvus (Brown lemur).